Consider the following 363-residue polypeptide: NADH-quinone oxidoreductase subunit H (363 aa).

9 helical membrane passes run 62–82 (GPMY…KLLF), 94–114 (AIFV…WAVV), 127–147 (VGLL…ILAG), 166–186 (VVSY…AAGS), 202–222 (FFDW…VSGV), 239–257 (IVAG…LFFL), 264–286 (ILVS…QGWV), 293–313 (LIDW…LFFA), and 339–359 (FIPL…SGVI).

It belongs to the complex I subunit 1 family. In terms of assembly, NDH-1 is composed of 14 different subunits. Subunits NuoA, H, J, K, L, M, N constitute the membrane sector of the complex.

The protein resides in the cell inner membrane. The catalysed reaction is a quinone + NADH + 5 H(+)(in) = a quinol + NAD(+) + 4 H(+)(out). Its function is as follows. NDH-1 shuttles electrons from NADH, via FMN and iron-sulfur (Fe-S) centers, to quinones in the respiratory chain. The immediate electron acceptor for the enzyme in this species is believed to be ubiquinone. Couples the redox reaction to proton translocation (for every two electrons transferred, four hydrogen ions are translocated across the cytoplasmic membrane), and thus conserves the redox energy in a proton gradient. This subunit may bind ubiquinone. This Xylella fastidiosa (strain 9a5c) protein is NADH-quinone oxidoreductase subunit H.